The primary structure comprises 193 residues: Flagellar transcriptional regulator FlhC (193 aa).

Residues cysteine 138, cysteine 141, cysteine 158, and cysteine 161 each contribute to the Zn(2+) site.

The protein belongs to the FlhC family. In terms of assembly, heterohexamer composed of two FlhC and four FlhD subunits. Each FlhC binds a FlhD dimer, forming a heterotrimer, and a hexamer assembles by dimerization of two heterotrimers. The cofactor is Zn(2+).

The protein localises to the cytoplasm. Its function is as follows. Functions in complex with FlhD as a master transcriptional regulator that regulates transcription of several flagellar and non-flagellar operons by binding to their promoter region. Activates expression of class 2 flagellar genes, including fliA, which is a flagellum-specific sigma factor that turns on the class 3 genes. Also regulates genes whose products function in a variety of physiological pathways. The polypeptide is Flagellar transcriptional regulator FlhC (Proteus mirabilis).